A 364-amino-acid polypeptide reads, in one-letter code: Molybdenum import ATP-binding protein ModC (364 aa).

An ABC transporter domain is found at 1–229 (MLLIDIKKQL…PLMRPWLNAS (229 aa)). 31 to 38 (GRSGAGKS) is a binding site for ATP. The region spanning 293–360 (HSSIRNILPV…IKGVSVTQSD (68 aa)) is the Mop domain.

Belongs to the ABC transporter superfamily. Molybdate importer (TC 3.A.1.8) family. In terms of assembly, the complex is composed of two ATP-binding proteins (ModC), two transmembrane proteins (ModB) and a solute-binding protein (ModA).

The protein resides in the cell inner membrane. The catalysed reaction is molybdate(out) + ATP + H2O = molybdate(in) + ADP + phosphate + H(+). Functionally, part of the ABC transporter complex ModABC involved in molybdenum import. Responsible for energy coupling to the transport system. In Aliivibrio fischeri (strain ATCC 700601 / ES114) (Vibrio fischeri), this protein is Molybdenum import ATP-binding protein ModC.